The following is an 834-amino-acid chain: U-box domain-containing protein 33 (834 aa).

The segment at 232-308 (FSTPESEHQH…SPSSFPDGVD (77 aa)) is disordered. Composition is skewed to polar residues over residues 243-273 (SRVQ…GSLN) and 284-293 (SEVTGSATVM). A coiled-coil region spans residues 334 to 462 (LRRQKAEKNA…SHAETSTLQL (129 aa)). Residues 481-744 (FDSTLKIGEG…EVWRVLEPMR (264 aa)) enclose the Protein kinase domain. ATP-binding positions include 487–495 (IGEGGYGSI) and K508. Residue D603 is the Proton acceptor of the active site. Residues 762–834 (IAPPYFICPI…AIQEWLQHHL (73 aa)) enclose the U-box domain.

It belongs to the protein kinase superfamily. Ser/Thr protein kinase family.

It catalyses the reaction L-seryl-[protein] + ATP = O-phospho-L-seryl-[protein] + ADP + H(+). The catalysed reaction is L-threonyl-[protein] + ATP = O-phospho-L-threonyl-[protein] + ADP + H(+). It carries out the reaction S-ubiquitinyl-[E2 ubiquitin-conjugating enzyme]-L-cysteine + [acceptor protein]-L-lysine = [E2 ubiquitin-conjugating enzyme]-L-cysteine + N(6)-ubiquitinyl-[acceptor protein]-L-lysine.. Its pathway is protein modification; protein ubiquitination. Its function is as follows. Functions as an E3 ubiquitin ligase. The polypeptide is U-box domain-containing protein 33 (PUB33) (Arabidopsis thaliana (Mouse-ear cress)).